The chain runs to 349 residues: Thylakoid lumenal 29 kDa protein, chloroplastic (349 aa).

Residue Ser-155 is modified to Phosphoserine.

Belongs to the peroxidase family.

It localises to the plastid. It is found in the chloroplast thylakoid lumen. The sequence is that of Thylakoid lumenal 29 kDa protein, chloroplastic (TL29) from Arabidopsis thaliana (Mouse-ear cress).